We begin with the raw amino-acid sequence, 137 residues long: Small ribosomal subunit protein uS11 (137 aa).

The interval 116-137 is disordered; that stretch reads EDVTPVPSDSTRKKGGRRGRRL. Residues 128–137 show a composition bias toward basic residues; sequence KKGGRRGRRL.

The protein belongs to the universal ribosomal protein uS11 family.

This Kluyveromyces lactis (strain ATCC 8585 / CBS 2359 / DSM 70799 / NBRC 1267 / NRRL Y-1140 / WM37) (Yeast) protein is Small ribosomal subunit protein uS11 (RPS14).